The following is a 23-amino-acid chain: Alpha-amanitin proprotein (23 aa).

Isoleucine 1 bears the (3R,4R)-4,5-dihydroxyisoleucine; in form alpha-amanitin mark. The residue at position 1 (isoleucine 1) is a (3R,4S)-4-hydroxyisoleucine; in form gamma-amanitin. A cross-link (cyclopeptide (Ile-Pro)) is located at residues 1-8 (IWGIGCNP). Residues 2–6 (WGIGC) constitute a cross-link (2'-cysteinyl-6'-hydroxytryptophan sulfoxide (Trp-Cys)). Position 8 is a 4-hydroxyproline (proline 8). Residues 9 to 23 (CVGDEVTALITRGEA) constitute a propeptide that is removed on maturation.

Belongs to the MSDIN fungal toxin family. In terms of processing, processed by the macrocyclase-peptidase enzyme POPB to yield a toxic cyclic decapeptide. POPB first removes 10 residues from the N-terminus. Conformational trapping of the remaining peptide forces the enzyme to release this intermediate rather than proceed to macrocyclization. The enzyme rebinds the remaining peptide in a different conformation and catalyzes macrocyclization of the N-terminal 8 residues.

In terms of biological role, major toxin belonging to the bicyclic octapeptides amatoxins that acts by binding non-competitively to RNA polymerase II and greatly slowing the elongation of transcripts from target promoters. This is Alpha-amanitin proprotein from Amanita fuligineoides.